The primary structure comprises 277 residues: Carbonyl reductase [NADPH] 1 (277 aa).

The residue at position 2 (Ser2) is an N-acetylserine. A Phosphoserine modification is found at Ser2. Residues Val10–Val34, Asp63–Ile64, and Asn90 contribute to the NADP(+) site. Glutathione is bound by residues Phe95–Val97 and Gln106. Ser140 serves as a coordination point for substrate. Ala193–Tyr194 contacts glutathione. Residue Tyr194 is the Proton acceptor of the active site. Residues Tyr194–Lys198 and Val231–Thr233 each bind NADP(+). The residue at position 239 (Lys239) is an N6-1-carboxyethyl lysine. Residues Pro258–Trp277 are disordered.

It belongs to the short-chain dehydrogenases/reductases (SDR) family. In terms of assembly, monomer.

The protein resides in the cytoplasm. The catalysed reaction is a secondary alcohol + NADP(+) = a ketone + NADPH + H(+). The enzyme catalyses prostaglandin F2alpha + NADP(+) = prostaglandin E2 + NADPH + H(+). It catalyses the reaction prostaglandin E1 + NADP(+) = 15-oxoprostaglandin E1 + NADPH + H(+). It carries out the reaction menadione + NADPH + H(+) = menadiol + NADP(+). The catalysed reaction is prostaglandin D2 + NADP(+) = 15-oxoprostaglandin D2 + NADPH + H(+). The enzyme catalyses prostaglandin E2 + NADP(+) = 15-oxoprostaglandin E2 + NADPH + H(+). It catalyses the reaction prostaglandin F2alpha + NADP(+) = 15-oxoprostaglandin F2alpha + NADPH + H(+). It carries out the reaction daunorubicin + NADPH + H(+) = 13-dihydrodaunorubicin + NADP(+). The catalysed reaction is S-nitrosoglutathione + NADPH + H(+) = S-(hydroxysulfenamide)glutathione + NADP(+). The enzyme catalyses a primary alcohol + NADP(+) = an aldehyde + NADPH + H(+). It catalyses the reaction cortisol + NADPH + H(+) = 20beta-dihydrocortisol + NADP(+). It carries out the reaction corticosterone + NADPH + H(+) = 20beta-dihydrocorticosterone + NADP(+). Functionally, NADPH-dependent reductase with broad substrate specificity. Catalyzes the reduction of a wide variety of carbonyl compounds including quinones, prostaglandins, menadione, plus various xenobiotics. Catalyzes the reduction of the antitumor anthracyclines doxorubicin and daunorubicin to the cardiotoxic compounds doxorubicinol and daunorubicinol. Can convert prostaglandin E to prostaglandin F2-alpha. Can bind glutathione, which explains its higher affinity for glutathione-conjugated substrates. Catalyzes the reduction of S-nitrosoglutathione. In addition, participates in the glucocorticoid metabolism by catalyzing the NADPH-dependent cortisol/corticosterone into 20beta-dihydrocortisol (20b-DHF) or 20beta-corticosterone (20b-DHB), which are weak agonists of NR3C1 and NR3C2 in adipose tissue. The polypeptide is Carbonyl reductase [NADPH] 1 (Rattus norvegicus (Rat)).